Consider the following 680-residue polypeptide: DNA-directed RNA polymerase subunit beta' (680 aa).

Zn(2+) contacts are provided by Cys69, Cys71, Cys87, and Cys90. Residues Asp489, Asp491, and Asp493 each coordinate Mg(2+).

This sequence belongs to the RNA polymerase beta' chain family. RpoC1 subfamily. As to quaternary structure, in plastids the minimal PEP RNA polymerase catalytic core is composed of four subunits: alpha, beta, beta', and beta''. When a (nuclear-encoded) sigma factor is associated with the core the holoenzyme is formed, which can initiate transcription. Mg(2+) is required as a cofactor. The cofactor is Zn(2+).

It is found in the plastid. It localises to the chloroplast. The catalysed reaction is RNA(n) + a ribonucleoside 5'-triphosphate = RNA(n+1) + diphosphate. In terms of biological role, DNA-dependent RNA polymerase catalyzes the transcription of DNA into RNA using the four ribonucleoside triphosphates as substrates. The chain is DNA-directed RNA polymerase subunit beta' from Lepidium virginicum (Virginia pepperweed).